Consider the following 435-residue polypeptide: Manganese transport system membrane protein MntC (435 aa).

Helical transmembrane passes span 17 to 37 (VLAG…FVLL), 42 to 62 (LIGD…FLFT), 68 to 88 (PFFL…IQLI), 98 to 118 (SAIG…LTYI), 143 to 163 (QDII…IVFF), 166 to 186 (FTLI…VRFL), 189 to 209 (LLAC…GVIL), 228 to 248 (LTGM…AGTL), and 255 to 275 (GMAT…FSMI).

This sequence belongs to the ABC-3 integral membrane protein family. In terms of assembly, the complex is probably composed of two ATP-binding proteins (MntB), two transmembrane proteins (MntC and MntD) and a solute-binding protein (MntA).

It is found in the cell membrane. In terms of biological role, probably part of the ABC transporter complex MntABCD involved in manganese import. Probably responsible for the translocation of the substrate across the membrane. The sequence is that of Manganese transport system membrane protein MntC from Bacillus subtilis (strain 168).